Consider the following 173-residue polypeptide: Protein SHI RELATED SEQUENCE 8 (173 aa).

The Zn(2+) site is built by cysteine 52, cysteine 63, cysteine 68, cysteine 72, and cysteine 79. The zn(2)-C6 fungal-type; degenerate DNA-binding region spans 52–79 (CQDFGNQAKKDCSHMRCRTCCKSRGFEC). The segment covering 100–110 (LATVQPQTQLP) has biased composition (low complexity). The interval 100-121 (LATVQPQTQLPRGESVPKRHRE) is disordered.

The protein belongs to the SHI protein family.

It localises to the nucleus. In terms of biological role, transcription activator that binds DNA on 5'-ACTCTAC-3' and promotes auxin homeostasis-regulating gene expression (e.g. YUC genes), as well as genes affecting stamen development, cell expansion and timing of flowering. Synergistically with other SHI-related proteins, regulates gynoecium, stamen and leaf development in a dose-dependent manner, controlling apical-basal patterning. Promotes style and stigma formation, and influence vascular development during gynoecium development. May also have a role in the formation and/or maintenance of the shoot apical meristem (SAM). The chain is Protein SHI RELATED SEQUENCE 8 (SRS8) from Arabidopsis thaliana (Mouse-ear cress).